The sequence spans 1372 residues: DNA-directed RNA polymerase subunit beta' (1372 aa).

Zn(2+) contacts are provided by C69, C71, C84, and C87. Mg(2+) is bound by residues D460, D462, and D464. 4 residues coordinate Zn(2+): C808, C882, C889, and C892.

This sequence belongs to the RNA polymerase beta' chain family. The RNAP catalytic core consists of 2 alpha, 1 beta, 1 beta' and 1 omega subunit. When a sigma factor is associated with the core the holoenzyme is formed, which can initiate transcription. Requires Mg(2+) as cofactor. It depends on Zn(2+) as a cofactor.

It catalyses the reaction RNA(n) + a ribonucleoside 5'-triphosphate = RNA(n+1) + diphosphate. DNA-dependent RNA polymerase catalyzes the transcription of DNA into RNA using the four ribonucleoside triphosphates as substrates. In Rickettsia akari (strain Hartford), this protein is DNA-directed RNA polymerase subunit beta'.